A 359-amino-acid chain; its full sequence is Phospho-N-acetylmuramoyl-pentapeptide-transferase (359 aa).

A run of 10 helical transmembrane segments spans residues glutamine 3–isoleucine 23, valine 55–phenylalanine 75, isoleucine 80–leucine 100, threonine 117–phenylalanine 137, isoleucine 156–alanine 176, leucine 187–phenylalanine 207, leucine 231–alanine 251, isoleucine 255–threonine 275, isoleucine 280–isoleucine 300, and phenylalanine 334–leucine 354.

The protein belongs to the glycosyltransferase 4 family. MraY subfamily. Mg(2+) is required as a cofactor.

It localises to the cell membrane. It catalyses the reaction UDP-N-acetyl-alpha-D-muramoyl-L-alanyl-gamma-D-glutamyl-meso-2,6-diaminopimeloyl-D-alanyl-D-alanine + di-trans,octa-cis-undecaprenyl phosphate = di-trans,octa-cis-undecaprenyl diphospho-N-acetyl-alpha-D-muramoyl-L-alanyl-D-glutamyl-meso-2,6-diaminopimeloyl-D-alanyl-D-alanine + UMP. The protein operates within cell wall biogenesis; peptidoglycan biosynthesis. In terms of biological role, catalyzes the initial step of the lipid cycle reactions in the biosynthesis of the cell wall peptidoglycan: transfers peptidoglycan precursor phospho-MurNAc-pentapeptide from UDP-MurNAc-pentapeptide onto the lipid carrier undecaprenyl phosphate, yielding undecaprenyl-pyrophosphoryl-MurNAc-pentapeptide, known as lipid I. This Mycobacterium ulcerans (strain Agy99) protein is Phospho-N-acetylmuramoyl-pentapeptide-transferase.